The primary structure comprises 89 residues: Small ribosomal subunit protein uS14 (89 aa).

Belongs to the universal ribosomal protein uS14 family. In terms of assembly, part of the 30S ribosomal subunit. Contacts proteins S3 and S10.

In terms of biological role, binds 16S rRNA, required for the assembly of 30S particles and may also be responsible for determining the conformation of the 16S rRNA at the A site. In Parabacteroides distasonis (strain ATCC 8503 / DSM 20701 / CIP 104284 / JCM 5825 / NCTC 11152), this protein is Small ribosomal subunit protein uS14.